Here is a 435-residue protein sequence, read N- to C-terminus: Glutamyl-tRNA reductase (435 aa).

Residues 49 to 52, Ser-109, 114 to 116, and Gln-120 each bind substrate; these read TCNR and EGQ. The Nucleophile role is filled by Cys-50. 198-203 contributes to the NADP(+) binding site; the sequence is GAGRMS.

This sequence belongs to the glutamyl-tRNA reductase family. As to quaternary structure, homodimer.

It catalyses the reaction (S)-4-amino-5-oxopentanoate + tRNA(Glu) + NADP(+) = L-glutamyl-tRNA(Glu) + NADPH + H(+). It participates in porphyrin-containing compound metabolism; protoporphyrin-IX biosynthesis; 5-aminolevulinate from L-glutamyl-tRNA(Glu): step 1/2. Its pathway is porphyrin-containing compound metabolism; chlorophyll biosynthesis. Its function is as follows. Catalyzes the NADPH-dependent reduction of glutamyl-tRNA(Glu) to glutamate 1-semialdehyde (GSA). In Prochlorococcus marinus (strain MIT 9211), this protein is Glutamyl-tRNA reductase.